We begin with the raw amino-acid sequence, 115 residues long: Putative ethidium bromide resistance protein (115 aa).

4 helical membrane-spanning segments follow: residues 4 to 21, 30 to 47, 58 to 79, and 85 to 104; these read WLFLVIAIVGEVIATSAL, LAPSAVVIIGYGIAFYFL, VAYAVWSGLGVVIITAIAWLLH, and AWGFVGMGLIIAAFLLARSP.

This sequence belongs to the drug/metabolite transporter (DMT) superfamily. Small multidrug resistance (SMR) (TC 2.A.7.1) family.

Its subcellular location is the cell membrane. Functionally, one of the determinants for resistance to ethidium bromide and quaternary ammonium compounds. In Escherichia coli, this protein is Putative ethidium bromide resistance protein (ebr).